We begin with the raw amino-acid sequence, 546 residues long: Phosphomethylpyrimidine synthase (546 aa).

Residues Asn145, Met174, Tyr203, His239, 259–261 (SRG), 300–303 (DGLR), and Glu339 each bind substrate. His343 is a binding site for Zn(2+). Position 366 (Tyr366) interacts with substrate. His407 provides a ligand contact to Zn(2+). [4Fe-4S] cluster is bound by residues Cys487, Cys490, and Cys495.

It belongs to the ThiC family. Requires [4Fe-4S] cluster as cofactor.

It carries out the reaction 5-amino-1-(5-phospho-beta-D-ribosyl)imidazole + S-adenosyl-L-methionine = 4-amino-2-methyl-5-(phosphooxymethyl)pyrimidine + CO + 5'-deoxyadenosine + formate + L-methionine + 3 H(+). It participates in cofactor biosynthesis; thiamine diphosphate biosynthesis. Its function is as follows. Catalyzes the synthesis of the hydroxymethylpyrimidine phosphate (HMP-P) moiety of thiamine from aminoimidazole ribotide (AIR) in a radical S-adenosyl-L-methionine (SAM)-dependent reaction. In Mycobacterium marinum (strain ATCC BAA-535 / M), this protein is Phosphomethylpyrimidine synthase.